The primary structure comprises 219 residues: Proteasome subunit beta (219 aa).

Positions 1–14 (MISNSEYHKEYMKG) are cleaved as a propeptide — removed in mature form; by autocatalysis. Residue T15 is the Nucleophile of the active site.

It belongs to the peptidase T1B family. The 20S proteasome core is composed of 14 alpha and 14 beta subunits that assemble into four stacked heptameric rings, resulting in a barrel-shaped structure. The two inner rings, each composed of seven catalytic beta subunits, are sandwiched by two outer rings, each composed of seven alpha subunits. The catalytic chamber with the active sites is on the inside of the barrel. Has a gated structure, the ends of the cylinder being occluded by the N-termini of the alpha-subunits. Is capped at one or both ends by the proteasome regulatory ATPase, PAN.

The protein localises to the cytoplasm. It carries out the reaction Cleavage of peptide bonds with very broad specificity.. The formation of the proteasomal ATPase PAN-20S proteasome complex, via the docking of the C-termini of PAN into the intersubunit pockets in the alpha-rings, triggers opening of the gate for substrate entry. Interconversion between the open-gate and close-gate conformations leads to a dynamic regulation of the 20S proteasome proteolysis activity. Its function is as follows. Component of the proteasome core, a large protease complex with broad specificity involved in protein degradation. The polypeptide is Proteasome subunit beta (Methanococcus maripaludis (strain C5 / ATCC BAA-1333)).